The primary structure comprises 361 residues: Caveolae-associated protein 4 (361 aa).

The segment at 1-21 (MEHNGSASNADKIHQNRLSNV) is disordered. Residues 100-124 (IKDVKARVEKQQTHVKKVEAKQEEI) adopt a coiled-coil conformation. Residues Ser-152, Ser-171, and Ser-172 each carry the phosphoserine modification. A coiled-coil region spans residues 204–248 (ENMQKTRQNFDKKVNRIRTRIVTPERRERLRQSGERLRQSGERLK). Positions 230–255 (RERLRQSGERLRQSGERLKQSGERFK) are enriched in basic and acidic residues. Disordered stretches follow at residues 230-283 (RERL…AVAE) and 310-346 (PEAL…FKPQ). Position 335 is a phosphothreonine (Thr-335). Position 354 is a phosphoserine (Ser-354).

The protein belongs to the CAVIN family. As to quaternary structure, component of the CAVIN complex composed of CAVIN1, CAVIN2, CAVIN3 and CAVIN4. Interacts with CAVIN1, ADRA1A, ADRA1B, MAPK1 and MAPK3. Interacts with CAVIN2; this augments the transactivation of NPPA.

The protein resides in the cytoplasm. The protein localises to the myofibril. It is found in the sarcomere. Its subcellular location is the cytosol. It localises to the cell membrane. The protein resides in the sarcolemma. The protein localises to the membrane. It is found in the caveola. Modulates the morphology of formed caveolae in cardiomyocytes, but is not required for caveolar formation. Facilitates the recruitment of MAPK1/3 to caveolae within cardiomyocytes and regulates alpha-1 adrenergic receptor-induced hypertrophic responses in cardiomyocytes through MAPK1/3 activation. Contributes to proper membrane localization and stabilization of caveolin-3 (CAV3) in cardiomyocytes. Induces RHOA activation and activates NPPA transcription and myofibrillar organization through the Rho/ROCK signaling pathway. The chain is Caveolae-associated protein 4 (CAVIN4) from Bos taurus (Bovine).